Reading from the N-terminus, the 202-residue chain is Probable thymidylate kinase (202 aa).

13-20 (GIDGSGKT) is a binding site for ATP.

This sequence belongs to the thymidylate kinase family.

The enzyme catalyses dTMP + ATP = dTDP + ADP. The chain is Probable thymidylate kinase from Picrophilus torridus (strain ATCC 700027 / DSM 9790 / JCM 10055 / NBRC 100828 / KAW 2/3).